A 101-amino-acid polypeptide reads, in one-letter code: Urease subunit beta (101 aa).

This sequence belongs to the urease beta subunit family. In terms of assembly, heterotrimer of UreA (gamma), UreB (beta) and UreC (alpha) subunits. Three heterotrimers associate to form the active enzyme.

Its subcellular location is the cytoplasm. The catalysed reaction is urea + 2 H2O + H(+) = hydrogencarbonate + 2 NH4(+). It participates in nitrogen metabolism; urea degradation; CO(2) and NH(3) from urea (urease route): step 1/1. This chain is Urease subunit beta, found in Polaromonas naphthalenivorans (strain CJ2).